Reading from the N-terminus, the 118-residue chain is p-cumate 2,3-dioxygenase system, ferredoxin component (118 aa).

The region spanning V14–V111 is the Rieske domain. 4 residues coordinate [2Fe-2S] cluster: C54, H56, C74, and H77.

This sequence belongs to the bacterial ring-hydroxylating dioxygenase ferredoxin component family. The p-cumate 2,3-dioxygenase multicomponent enzyme system is composed of an electron transfer component and a dioxygenase component (iron sulfur protein (ISP)). The electron transfer component is composed of a ferredoxin reductase (CmtAa) and a ferredoxin (CmtAd), and the dioxygenase component is formed of a large alpha subunit (CmtAb) and a small beta subunit (CmtAc). The cofactor is [2Fe-2S] cluster.

The protein operates within aromatic compound metabolism; p-cumate degradation; acetaldehyde and pyruvate from p-cumate. Functionally, component of the p-cumate 2,3-dioxygenase multicomponent enzyme system which catalyzes the incorporation of both atoms of molecular oxygen into p-cumate to form cis-2,3-dihydroxy-2,3-dihydro-p-cumate. Functions as an intermediate electron transfer protein via a specific interaction with iron sulfur protein components (ISP)(CmtAb and CmtAc). The sequence is that of p-cumate 2,3-dioxygenase system, ferredoxin component from Pseudomonas putida (Arthrobacter siderocapsulatus).